The chain runs to 421 residues: NADH-quinone oxidoreductase subunit F 2 (421 aa).

Residue 53–62 (GRGGAGFPTG) participates in NAD(+) binding. An FMN-binding site is contributed by 165 to 212 (GAGAYICGEETAMLESLEGKRAQPRLKPPFPAVAGLYASPTVINNVET). 4 residues coordinate [4Fe-4S] cluster: cysteine 342, cysteine 345, cysteine 348, and cysteine 388.

This sequence belongs to the complex I 51 kDa subunit family. Requires FMN as cofactor. It depends on [4Fe-4S] cluster as a cofactor.

It carries out the reaction a quinone + NADH + 5 H(+)(in) = a quinol + NAD(+) + 4 H(+)(out). Functionally, NDH-1 shuttles electrons from NADH, via FMN and iron-sulfur (Fe-S) centers, to quinones in the respiratory chain. The immediate electron acceptor for the enzyme in this species is believed to be ubiquinone. Couples the redox reaction to proton translocation (for every two electrons transferred, four hydrogen ions are translocated across the cytoplasmic membrane), and thus conserves the redox energy in a proton gradient. This is NADH-quinone oxidoreductase subunit F 2 (nuoF2) from Rhizobium meliloti (strain 1021) (Ensifer meliloti).